The sequence spans 77 residues: Secapin (77 aa).

A signal peptide spans 1-32 (MKNYSKNATYLITVLLFSFVAMLLIIPSKCEA). The propeptide occupies 33–52 (VSNDMQPLEARSADLVPEPR). A disulfide bridge links Cys-61 with Cys-72.

Belongs to the secapin family. As to expression, expressed by the venom gland.

It is found in the secreted. Its function is as follows. Nontoxic peptide. This is Secapin from Vespa magnifica (Hornet).